We begin with the raw amino-acid sequence, 165 residues long: UPF0303 protein BTH_I2506 (165 aa).

The protein belongs to the UPF0303 family.

This chain is UPF0303 protein BTH_I2506, found in Burkholderia thailandensis (strain ATCC 700388 / DSM 13276 / CCUG 48851 / CIP 106301 / E264).